Here is a 243-residue protein sequence, read N- to C-terminus: Probable heat shock transcription factor (243 aa).

A DNA-binding region spans residues 9–102 (INKFIRRLYK…GDNLLPCIQR (94 aa)). An involved in trimerization region spans residues 121–164 (QLQDLLQYLNNQNFKLEGEIKSLKDRVDQQDCTINGLVQLLTRI).

This sequence belongs to the HSF family. As to quaternary structure, homotrimer. Homotrimerization increases the affinity of HSF1 to DNA.

The protein resides in the nucleus. Its function is as follows. DNA-binding transcription factor that specifically binds heat shock promoter elements (HSE) and activates transcription. The chain is Probable heat shock transcription factor from Vairimorpha ceranae (strain BRL01) (Microsporidian parasite).